Consider the following 952-residue polypeptide: Inter-alpha-trypsin inhibitor heavy chain H5 (952 aa).

A signal peptide spans 1–17 (MLLLLGLCLGLPLFSES). A VIT domain is found at 35 to 161 (VPRQLRLLQR…KAAFFLSYEE (127 aa)). N-linked (GlcNAc...) asparagine glycans are attached at residues Asn-97, Asn-127, Asn-136, and Asn-231. Positions 113–131 (QKDKKSSESVKDKRNRTSD) are enriched in basic and acidic residues. Residues 113–138 (QKDKKSSESVKDKRNRTSDDNEENGS) form a disordered region. The VWFA domain maps to 295 to 478 (NVVFVLDISA…AQLIGFYDEI (184 aa)). 4 N-linked (GlcNAc...) asparagine glycosylation sites follow: Asn-508, Asn-776, Asn-795, and Asn-862. Positions 933 to 952 (ALGLSTPRKPETDRPHEESV) are disordered. The span at 940-952 (RKPETDRPHEESV) shows a compositional bias: basic and acidic residues.

Belongs to the ITIH family.

It is found in the secreted. May act as a tumor suppressor. In Mus musculus (Mouse), this protein is Inter-alpha-trypsin inhibitor heavy chain H5 (Itih5).